The chain runs to 228 residues: uncharacterized protein (228 aa).

Position 21 to 28 (21 to 28 (GMIALGKT)) interacts with ATP.

This is an uncharacterized protein from Mycoplasma genitalium (strain ATCC 33530 / DSM 19775 / NCTC 10195 / G37) (Mycoplasmoides genitalium).